A 114-amino-acid chain; its full sequence is MHELSIVESLIELCEENALNNKAYNVQEIYVKIGRLSGIEVDLFKRCFETFKENSNICKNAKLFIELAPLEILCLKCDQTSILEENVFKCPKCQSIEYKIIQGEDLHLMRLVMK.

Residue His2 coordinates Ni(2+). The Zn(2+) site is built by Cys74, Cys77, Cys90, and Cys93.

This sequence belongs to the HypA/HybF family.

Its function is as follows. Involved in the maturation of [NiFe] hydrogenases. Required for nickel insertion into the metal center of the hydrogenase. This Campylobacter jejuni subsp. jejuni serotype O:2 (strain ATCC 700819 / NCTC 11168) protein is Hydrogenase maturation factor HypA.